The chain runs to 695 residues: Translation initiation factor IF-2 (695 aa).

The segment at 60–92 (KKSASSKKKTEKEVEEEEIETPKKKKKQEEKIP) is disordered. A tr-type G domain is found at 184 to 358 (QRPPVVTVMG…EMSEIKCIPT (175 aa)). Positions 193–200 (GHVDHGKT) are G1. A GTP-binding site is contributed by 193–200 (GHVDHGKT). Positions 218-222 (GITQS) are G2. The tract at residues 239-242 (DTPG) is G3. GTP-binding positions include 239-243 (DTPGH) and 293-296 (NKID). The interval 293-296 (NKID) is G4. Residues 330 to 332 (SAK) are G5.

The protein belongs to the TRAFAC class translation factor GTPase superfamily. Classic translation factor GTPase family. IF-2 subfamily.

The protein resides in the cytoplasm. Its function is as follows. One of the essential components for the initiation of protein synthesis. Protects formylmethionyl-tRNA from spontaneous hydrolysis and promotes its binding to the 30S ribosomal subunits. Also involved in the hydrolysis of GTP during the formation of the 70S ribosomal complex. In Kosmotoga olearia (strain ATCC BAA-1733 / DSM 21960 / TBF 19.5.1), this protein is Translation initiation factor IF-2.